Consider the following 428-residue polypeptide: D-amino acid dehydrogenase (428 aa).

3-17 provides a ligand contact to FAD; that stretch reads VVILGSGVVGVASAY.

It belongs to the DadA oxidoreductase family. The cofactor is FAD.

It carries out the reaction a D-alpha-amino acid + A + H2O = a 2-oxocarboxylate + AH2 + NH4(+). Its pathway is amino-acid degradation; D-alanine degradation; NH(3) and pyruvate from D-alanine: step 1/1. Oxidative deamination of D-amino acids. The polypeptide is D-amino acid dehydrogenase (Burkholderia vietnamiensis (strain G4 / LMG 22486) (Burkholderia cepacia (strain R1808))).